The sequence spans 439 residues: Xaa-Pro dipeptidase (439 aa).

Residues D244, D255, H335, E380, and E419 each contribute to the Mn(2+) site.

The protein belongs to the peptidase M24B family. Bacterial-type prolidase subfamily. The cofactor is Mn(2+).

It carries out the reaction Xaa-L-Pro dipeptide + H2O = an L-alpha-amino acid + L-proline. Functionally, splits dipeptides with a prolyl residue in the C-terminal position. This is Xaa-Pro dipeptidase from Shewanella sp. (strain MR-7).